A 139-amino-acid polypeptide reads, in one-letter code: Putative pre-16S rRNA nuclease (139 aa).

This sequence belongs to the YqgF nuclease family.

Its subcellular location is the cytoplasm. Could be a nuclease involved in processing of the 5'-end of pre-16S rRNA. This Legionella pneumophila subsp. pneumophila (strain Philadelphia 1 / ATCC 33152 / DSM 7513) protein is Putative pre-16S rRNA nuclease.